A 108-amino-acid polypeptide reads, in one-letter code: Nucleoid-associated protein BamMC406_1737 (108 aa).

Over residues 85-95 the composition is skewed to polar residues; that stretch reads ATSQEKMSGMT. A disordered region spans residues 85–108; sequence ATSQEKMSGMTSGLPLPPGFKLPF. Pro residues predominate over residues 99–108; it reads PLPPGFKLPF.

This sequence belongs to the YbaB/EbfC family. In terms of assembly, homodimer.

The protein resides in the cytoplasm. It is found in the nucleoid. Binds to DNA and alters its conformation. May be involved in regulation of gene expression, nucleoid organization and DNA protection. The polypeptide is Nucleoid-associated protein BamMC406_1737 (Burkholderia ambifaria (strain MC40-6)).